The primary structure comprises 105 residues: Large ribosomal subunit protein uL24 (105 aa).

The protein belongs to the universal ribosomal protein uL24 family. Part of the 50S ribosomal subunit.

Its function is as follows. One of two assembly initiator proteins, it binds directly to the 5'-end of the 23S rRNA, where it nucleates assembly of the 50S subunit. One of the proteins that surrounds the polypeptide exit tunnel on the outside of the subunit. In Vibrio atlanticus (strain LGP32) (Vibrio splendidus (strain Mel32)), this protein is Large ribosomal subunit protein uL24.